The sequence spans 159 residues: Phosphopantetheine adenylyltransferase (159 aa).

S9 lines the substrate pocket. ATP contacts are provided by residues 9-10 (SF) and H17. Positions 41, 74, and 88 each coordinate substrate. ATP-binding positions include 89–91 (GLR), E99, and 123–129 (YGYISST).

This sequence belongs to the bacterial CoaD family. In terms of assembly, homohexamer. Requires Mg(2+) as cofactor.

The protein resides in the cytoplasm. It catalyses the reaction (R)-4'-phosphopantetheine + ATP + H(+) = 3'-dephospho-CoA + diphosphate. Its pathway is cofactor biosynthesis; coenzyme A biosynthesis; CoA from (R)-pantothenate: step 4/5. Functionally, reversibly transfers an adenylyl group from ATP to 4'-phosphopantetheine, yielding dephospho-CoA (dPCoA) and pyrophosphate. The polypeptide is Phosphopantetheine adenylyltransferase (Corynebacterium diphtheriae (strain ATCC 700971 / NCTC 13129 / Biotype gravis)).